The following is a 76-amino-acid chain: Kappa-actitoxin-Avd4m (76 aa).

The signal sequence occupies residues 1–19 (MNKALFLCLVVLCAAVVFA). Positions 20 to 31 (AEDLQKAKHAPF) are excised as a propeptide. 3 cysteine pairs are disulfide-bonded: C37/C72, C39/C65, and C55/C73.

It belongs to the sea anemone type 3 (BDS) potassium channel toxin family. In terms of tissue distribution, weakly expressed in the ectodermal tissue from the distal and proximal tentacles, body wall, and oral disk.

The protein localises to the secreted. The protein resides in the nematocyst. Its function is as follows. Blocks Kv3 voltage-gated potassium channels. Reduces blood pressure. The protein is Kappa-actitoxin-Avd4m of Anemonia viridis (Snakelocks anemone).